Reading from the N-terminus, the 303-residue chain is MANYEFSQVSEDRPGCRLTRKAQIGLGVGLLLLVALVVVVVIVLWPRSPLVWKGKPTTKHFADIILGRCLIYTQILRPEMRDQDCKKILSTFKRGFISKNPCNITNEDYAPLVKLVTQTIPCNKTLFWSKSKHLAHQYTWIQGKMFTLEDTLLGYIADDLRWCGDPSTSDMNYDSCPHWSENCPNNPVAVFWNVISQKFAEDACGVVQVMLNGSLSEPFYRNSTFGSVEVFNLDPNKVHKLQAWVMHDIKGTSSNACSSPSINELKSIVNKRNMIFACQDNYRPVRFLQCVKNPEHPSCRLNV.

The Cytoplasmic portion of the chain corresponds to 1–21 (MANYEFSQVSEDRPGCRLTRK). A helical; Signal-anchor for type II membrane protein transmembrane segment spans residues 22–44 (AQIGLGVGLLLLVALVVVVVIVL). Residues 45–303 (WPRSPLVWKG…PEHPSCRLNV (259 aa)) lie on the Extracellular side of the membrane. Disulfide bonds link cysteine 69–cysteine 85, cysteine 102–cysteine 183, and cysteine 163–cysteine 176. An N-linked (GlcNAc...) asparagine glycan is attached at asparagine 103. Cysteine 122 is an active-site residue. N-linked (GlcNAc...) asparagine glycosylation is present at asparagine 123. Cysteine 204 is a catalytic residue. Residues asparagine 212 and asparagine 222 are each glycosylated (N-linked (GlcNAc...) asparagine). Cystine bridges form between cysteine 257/cysteine 278 and cysteine 290/cysteine 299.

The protein belongs to the ADP-ribosyl cyclase family. Homodimer. Spleen, liver, heart, thymus, thyroid gland, ileum, colon, cerebellum, salivary gland, adrenal gland, jejunum, islets of Langerhans and osteoclasts.

It localises to the cell membrane. It catalyses the reaction NAD(+) = cyclic ADP-beta-D-ribose + nicotinamide + H(+). The catalysed reaction is nicotinate + NADP(+) = nicotinate-adenine dinucleotide phosphate + nicotinamide. It carries out the reaction NAD(+) + H2O = ADP-D-ribose + nicotinamide + H(+). With respect to regulation, both NAADP and cADPR synthesis are inhibited by nicotinic acid. Its function is as follows. Synthesizes the second messengers cyclic ADP-ribose and nicotinate-adenine dinucleotide phosphate, the former a second messenger for glucose-induced insulin secretion, the latter a Ca(2+) mobilizer. Also has cADPR hydrolase activity. Regulates osteoclastic bone resorption, probably via production of cyclic ADP-ribose and triggering of a cytosolic calcium ion signal through ryanodine receptor activation. This chain is ADP-ribosyl cyclase/cyclic ADP-ribose hydrolase 1 (Cd38), found in Rattus norvegicus (Rat).